Reading from the N-terminus, the 1343-residue chain is DNA-directed RNA polymerase subunit beta (1343 aa).

Belongs to the RNA polymerase beta chain family. In terms of assembly, the RNAP catalytic core consists of 2 alpha, 1 beta, 1 beta' and 1 omega subunit. When a sigma factor is associated with the core the holoenzyme is formed, which can initiate transcription.

The enzyme catalyses RNA(n) + a ribonucleoside 5'-triphosphate = RNA(n+1) + diphosphate. Its function is as follows. DNA-dependent RNA polymerase catalyzes the transcription of DNA into RNA using the four ribonucleoside triphosphates as substrates. This chain is DNA-directed RNA polymerase subunit beta, found in Buchnera aphidicola subsp. Cinara cedri (strain Cc).